The sequence spans 459 residues: Autophagy-related protein 18 (459 aa).

2 WD repeats span residues 1–39 and 188–228; these read MTSP…RIFS and AHRS…KLYQ. The necessary for proper localization to vacuole membrane stretch occupies residues 229–232; the sequence is FRRG. The short motif at 229–233 is the L/FRRG motif element; it reads FRRGT. A WD 3 repeat occupies 233–272; that stretch reads TYPSTIYSMSFNLSSTLLCVSSTSDTIHIFRLGAPPGNTT. Residues 264–339 are disordered; the sequence is LGAPPGNTTP…RGSGSFSSML (76 aa). Over residues 265-277 the composition is skewed to low complexity; that stretch reads GAPPGNTTPAGAP. Residues 285 to 296 show a composition bias toward basic and acidic residues; that stretch reads RQDRWSRARSYD. Positions 319–330 are enriched in gly residues; it reads PGAGNNQGGHTR. One copy of the WD 4 repeat lies at 393 to 433; the sequence is APGGPLRSVVAMSSSSPQVMVVTSDGGFYVYNIDMEHGGEG.

It belongs to the WD repeat PROPPIN family. Component of the PI(3,5)P2 regulatory complex. Interacts with ATG2 and ATG9. The ATG2-ATG18 complex is essential for autophagosome formation.

It localises to the preautophagosomal structure membrane. Its subcellular location is the vacuole membrane. It is found in the endosome membrane. Component of the PI(3,5)P2 regulatory complex that regulates both the synthesis and turnover of phosphatidylinositol 3,5-bisphosphate (PtdIns(3,5)P2). Plays an important role in osmotically-induced vacuole fragmentation. Required for cytoplasm to vacuole transport (Cvt) vesicle formation, pexophagy and starvation-induced autophagy. Involved in correct ATG9 trafficking to the pre-autophagosomal structure. With ATG2, protects ATG8 from ATG4-mediated cleavage. Autophagy is required for proper vegetative growth, asexual/sexual reproduction, and full virulence. Autophagy is particularly involved in the biosynthesis of deoxynivalenol (DON), an important virulence determinant. The protein is Autophagy-related protein 18 of Gibberella zeae (strain ATCC MYA-4620 / CBS 123657 / FGSC 9075 / NRRL 31084 / PH-1) (Wheat head blight fungus).